The primary structure comprises 185 residues: Ribosome-recycling factor (185 aa).

The protein belongs to the RRF family.

It is found in the cytoplasm. Functionally, responsible for the release of ribosomes from messenger RNA at the termination of protein biosynthesis. May increase the efficiency of translation by recycling ribosomes from one round of translation to another. In Legionella pneumophila (strain Paris), this protein is Ribosome-recycling factor.